The sequence spans 197 residues: Imidazoleglycerol-phosphate dehydratase (197 aa).

This sequence belongs to the imidazoleglycerol-phosphate dehydratase family.

Its subcellular location is the cytoplasm. The enzyme catalyses D-erythro-1-(imidazol-4-yl)glycerol 3-phosphate = 3-(imidazol-4-yl)-2-oxopropyl phosphate + H2O. It functions in the pathway amino-acid biosynthesis; L-histidine biosynthesis; L-histidine from 5-phospho-alpha-D-ribose 1-diphosphate: step 6/9. This chain is Imidazoleglycerol-phosphate dehydratase, found in Syntrophomonas wolfei subsp. wolfei (strain DSM 2245B / Goettingen).